Here is a 502-residue protein sequence, read N- to C-terminus: 4,4'-diapophytoene desaturase (4,4'-diaponeurosporene-forming) (502 aa).

Position 5–17 (5–17) interacts with FAD; sequence VIGAGVTGLAAAA.

The protein belongs to the carotenoid/retinoid oxidoreductase family. CrtN subfamily.

The enzyme catalyses 15-cis-4,4'-diapophytoene + 3 FAD + 3 H(+) = all-trans-4,4'-diaponeurosporene + 3 FADH2. It participates in carotenoid biosynthesis; staphyloxanthin biosynthesis; staphyloxanthin from farnesyl diphosphate: step 2/5. In terms of biological role, involved in the biosynthesis of the yellow-orange carotenoid staphyloxanthin, which plays a role in the virulence via its protective function against oxidative stress. Catalyzes three successive dehydrogenation reactions that lead to the introduction of three double bonds into 4,4'-diapophytoene (dehydrosqualene), with 4,4'-diapophytofluene and 4,4'-diapo-zeta-carotene as intermediates, and 4,4'-diaponeurosporene (the major deep-yellow pigment in staphylococci strains) as the end product. This chain is 4,4'-diapophytoene desaturase (4,4'-diaponeurosporene-forming), found in Staphylococcus aureus (strain MRSA252).